The sequence spans 222 residues: Probable transaldolase (222 aa).

K83 acts as the Schiff-base intermediate with substrate in catalysis.

It belongs to the transaldolase family. Type 3B subfamily.

It localises to the cytoplasm. It carries out the reaction D-sedoheptulose 7-phosphate + D-glyceraldehyde 3-phosphate = D-erythrose 4-phosphate + beta-D-fructose 6-phosphate. The protein operates within carbohydrate degradation; pentose phosphate pathway; D-glyceraldehyde 3-phosphate and beta-D-fructose 6-phosphate from D-ribose 5-phosphate and D-xylulose 5-phosphate (non-oxidative stage): step 2/3. Transaldolase is important for the balance of metabolites in the pentose-phosphate pathway. The polypeptide is Probable transaldolase (Nitrosopumilus maritimus (strain SCM1)).